Consider the following 500-residue polypeptide: Pyridine nucleotide-disulfide oxidoreductase domain-containing protein 1 (500 aa).

An N-acetylmethionine modification is found at Met1. The segment at Thr211–Leu235 is disordered. Positions Tyr213 to Ala228 are enriched in basic and acidic residues.

It belongs to the class-I pyridine nucleotide-disulfide oxidoreductase family. PYROXD1 subfamily. The cofactor is FAD.

It is found in the nucleus. Its subcellular location is the cytoplasm. The protein resides in the myofibril. It localises to the sarcomere. Functionally, probable FAD-dependent oxidoreductase; involved in the cellular oxidative stress response. Required for normal sarcomere structure and muscle fiber integrity. The sequence is that of Pyridine nucleotide-disulfide oxidoreductase domain-containing protein 1 (PYROXD1) from Homo sapiens (Human).